The sequence spans 349 residues: KH domain-containing, RNA-binding, signal transduction-associated protein 2 (349 aa).

A KH domain is found at 65–135; that stretch reads LIPVKQYPKF…HLSDELHVLI (71 aa). 2 disordered regions span residues 181–263 and 320–349; these read SEES…PPPA and EEWT…YGRY. Over residues 218-231 the composition is skewed to low complexity; it reads RGVLTPRGTTVTRG. Arginine 230 and arginine 240 each carry omega-N-methylarginine. Residues 340–349 show a composition bias toward basic and acidic residues; sequence GYREHPYGRY.

The protein belongs to the KHDRBS family. Self-associates to form homooligomers. Interacts with SAFB, SFRS9 and YTHDC1. Found in a complex with KHDRBS1, KHDRBS2 and KHDRBS3. Interacts with RBMX. Interacts with the SH3 domains of FYN and PLCG1. Interacts with the SH2 domains of FYN, GRAP2, PLCG1 and RASA1. Interacts with RBMX. In terms of processing, methylated. Phosphorylated on tyrosine residues by FYN. Tyrosine phosphorylated by PTK6 and SRC. Tyrosine phosphorylated by SRC during mitosis. Expressed in the cortex, cerebellum, striatum, midbrain, brainstem and thalamus of the brain (at protein level). Expressed in neurons (at protein level). Expressed in brain and testis. Expressed in the dentate gyrus of the hippocampus.

Its subcellular location is the nucleus. In terms of biological role, RNA-binding protein that plays a role in the regulation of alternative splicing and influences mRNA splice site selection and exon inclusion. Its phosphorylation by FYN inhibits its ability to regulate splice site selection. Induces an increased concentration-dependent incorporation of exon in CD44 pre-mRNA by direct binding to purine-rich exonic enhancer. May function as an adapter protein for Src kinases during mitosis. Binds both poly(A) and poly(U) homopolymers. Phosphorylation by PTK6 inhibits its RNA-binding ability. The protein is KH domain-containing, RNA-binding, signal transduction-associated protein 2 (Khdrbs2) of Rattus norvegicus (Rat).